The primary structure comprises 490 residues: Betaine aldehyde dehydrogenase (490 aa).

Residues Ser26, Ile27, and Asp93 each coordinate K(+). An NAD(+)-binding site is contributed by 150–152; it reads GAW. The active-site Charge relay system is the Lys162. NAD(+) contacts are provided by residues 176–179 and 230–233; these read KPSE and GVET. Leu246 is a binding site for K(+). Glu252 (proton acceptor) is an active-site residue. NAD(+) is bound by residues Gly254, Cys286, and Glu387. The active-site Nucleophile is Cys286. Position 286 is a cysteine sulfenic acid (-SOH) (Cys286). Residues Lys457 and Gly460 each contribute to the K(+) site. Catalysis depends on Glu464, which acts as the Charge relay system.

It belongs to the aldehyde dehydrogenase family. Dimer of dimers. The cofactor is K(+).

It catalyses the reaction betaine aldehyde + NAD(+) + H2O = glycine betaine + NADH + 2 H(+). The protein operates within amine and polyamine biosynthesis; betaine biosynthesis via choline pathway; betaine from betaine aldehyde: step 1/1. In terms of biological role, involved in the biosynthesis of the osmoprotectant glycine betaine. Catalyzes the irreversible oxidation of betaine aldehyde to the corresponding acid. This Acinetobacter baumannii (strain ACICU) protein is Betaine aldehyde dehydrogenase.